The following is a 147-amino-acid chain: Transcription antitermination protein NusB (147 aa).

This sequence belongs to the NusB family.

Functionally, involved in transcription antitermination. Required for transcription of ribosomal RNA (rRNA) genes. Binds specifically to the boxA antiterminator sequence of the ribosomal RNA (rrn) operons. The polypeptide is Transcription antitermination protein NusB (Teredinibacter turnerae (strain ATCC 39867 / T7901)).